A 485-amino-acid polypeptide reads, in one-letter code: NADH-quinone oxidoreductase subunit N (485 aa).

14 consecutive transmembrane segments (helical) span residues 8–28 (LIALLPLLIVGLTVVVVMLSI), 35–55 (FLNATLSVIGLNAALVSLWFV), 71–91 (GFAMLYTGLVLLASLATCTFA), 105–125 (FYLLVLIAALGGILLANANHL), 127–147 (SLFLGIELISLPLFGLVGYAF), 159–179 (YTILSAAASSFLLFGMALVYA), 203–223 (LLAGFGLMIVGLGFKLSLVPF), 235–255 (PAPVSTFLATASKIAIFGVVM), 271–291 (VVLAIIAFASIIFGNLMALSQ), 297–317 (LLGYSSISHLGYLLVALIALQ), 326–346 (VGVYLVGYLFSSLGAFGVVSL), 373–393 (AAVMTVMMLSLAGIPMTLGFI), 408–430 (WWLVGAVVVGSAIGLYYYLRVAV), and 455–475 (IVVLISALLVLVLGVWPQPLI).

It belongs to the complex I subunit 2 family. NDH-1 is composed of 13 different subunits. Subunits NuoA, H, J, K, L, M, N constitute the membrane sector of the complex.

It is found in the cell inner membrane. The enzyme catalyses a quinone + NADH + 5 H(+)(in) = a quinol + NAD(+) + 4 H(+)(out). NDH-1 shuttles electrons from NADH, via FMN and iron-sulfur (Fe-S) centers, to quinones in the respiratory chain. The immediate electron acceptor for the enzyme in this species is believed to be ubiquinone. Couples the redox reaction to proton translocation (for every two electrons transferred, four hydrogen ions are translocated across the cytoplasmic membrane), and thus conserves the redox energy in a proton gradient. This Escherichia coli O81 (strain ED1a) protein is NADH-quinone oxidoreductase subunit N.